The chain runs to 605 residues: Adenine deaminase (605 aa).

This sequence belongs to the metallo-dependent hydrolases superfamily. Adenine deaminase family. The cofactor is Mn(2+).

It catalyses the reaction adenine + H2O + H(+) = hypoxanthine + NH4(+). The polypeptide is Adenine deaminase (Staphylothermus marinus (strain ATCC 43588 / DSM 3639 / JCM 9404 / F1)).